The following is a 381-amino-acid chain: Glycerophosphocholine acyltransferase 1 (381 aa).

Over 1–63 the chain is Cytoplasmic; it reads MANNEDSNSN…IAKQAEEHER (63 aa). Residues 64–84 traverse the membrane as a helical segment; the sequence is FINKVTHLVGVLGFGGFCFLL. Over 85-89 the chain is Lumenal; it reads GARPQ. A helical membrane pass occupies residues 90-110; it reads DIPLVYCFFYVIFVPLRWIYY. At 111 to 116 the chain is on the cytoplasmic side; the sequence is RFKKWH. A helical membrane pass occupies residues 117-137; that stretch reads YYLLDFCYYANTIFLVDLLLY. Over 138–141 the chain is Lumenal; that stretch reads PKNE. Residues 142–162 traverse the membrane as a helical segment; sequence KLFMVCFSFAEGPLAWAIIVW. At 163–173 the chain is on the cytoplasmic side; that stretch reads RCSLVFSSPDK. Residues 174–194 form a helical membrane-spanning segment; that stretch reads IVSVLIHLLPGLVFFTIRWWN. The Lumenal segment spans residues 195–223; it reads PATFAAMHPVGTDRRVSWPYVEDKAYLFT. The helical transmembrane segment at 224 to 244 threads the bilayer; it reads WLFLVPLVVYTLWQVLYFLIV. Topologically, residues 245 to 291 are cytoplasmic; sequence NVLRRQRLLRDPEVMTSYRELSKKAEKANNKLWQLSGLLGDQNRIWM. Residues 292–312 form a helical membrane-spanning segment; sequence YILFQAIFTVATMALTVPIFL. Residues 313 to 315 are Lumenal-facing; the sequence is SYR. The helical transmembrane segment at 316 to 336 threads the bilayer; the sequence is LHVIFQILKISAAVWNGGSFL. Residues 337 to 381 lie on the Cytoplasmic side of the membrane; that stretch reads LEVMPRQVIQKEKKKKAEMQPIEEQILHHEAVSHPTENEPKSTET.

The protein belongs to the GPC1 family.

It localises to the membrane. The catalysed reaction is sn-glycerol 3-phosphocholine + an acyl-CoA = a 1-acyl-sn-glycero-3-phosphocholine + CoA. It catalyses the reaction sn-glycero-3-phosphoethanolamine + an acyl-CoA = a monoacyl-sn-glycero-3-phosphoethanolamine + CoA. It carries out the reaction sn-glycerol 3-phosphocholine + (9Z)-octadecenoyl-CoA = (9Z-octadecenoyl)-sn-glycero-3-phosphocholine + CoA. Functionally, glycerophosphocholine acyltransferase (GPCAT) that utilizes acyl-CoA to acylate glycero-3-phosphocholine (GPC), forming lysophosphatidylcholine (LPC). Shows broad acyl specificities with a preference for 16:0-CoA, polyunsaturated acyl-CoA, and the hydroxylated ricinoleoyl-CoA. Also catalyzes the acylation of glycero-3-phosphoethanolamine (GPE) with acyl-CoA. In addition to acyl-CoA, GPCAT efficiently utilizes LPC and lysophosphatidylethanolamine (LPE) as acyl donors in the acylation of GPC. Contributes to the maintenance of phosphatidylcholine (PC) homeostasis and might also have specific functions in acyl editing of PC, such as transferring acyl groups modified at the sn-2 position of PC to the sn-1. This Arabidopsis thaliana (Mouse-ear cress) protein is Glycerophosphocholine acyltransferase 1.